We begin with the raw amino-acid sequence, 434 residues long: Trigger factor (434 aa).

The region spanning 160-245 (GDKAKINFVG…LNEVQAANLP (86 aa)) is the PPIase FKBP-type domain.

It belongs to the FKBP-type PPIase family. Tig subfamily.

Its subcellular location is the cytoplasm. It catalyses the reaction [protein]-peptidylproline (omega=180) = [protein]-peptidylproline (omega=0). Its function is as follows. Involved in protein export. Acts as a chaperone by maintaining the newly synthesized protein in an open conformation. Functions as a peptidyl-prolyl cis-trans isomerase. The sequence is that of Trigger factor from Shewanella woodyi (strain ATCC 51908 / MS32).